The chain runs to 189 residues: Large ribosomal subunit protein bL9 (189 aa).

This sequence belongs to the bacterial ribosomal protein bL9 family.

Its function is as follows. Binds to the 23S rRNA. The polypeptide is Large ribosomal subunit protein bL9 (Brucella melitensis biotype 2 (strain ATCC 23457)).